We begin with the raw amino-acid sequence, 257 residues long: Imidazole glycerol phosphate synthase subunit HisF (257 aa).

Active-site residues include Asp11 and Asp130.

It belongs to the HisA/HisF family. In terms of assembly, heterodimer of HisH and HisF.

The protein localises to the cytoplasm. It catalyses the reaction 5-[(5-phospho-1-deoxy-D-ribulos-1-ylimino)methylamino]-1-(5-phospho-beta-D-ribosyl)imidazole-4-carboxamide + L-glutamine = D-erythro-1-(imidazol-4-yl)glycerol 3-phosphate + 5-amino-1-(5-phospho-beta-D-ribosyl)imidazole-4-carboxamide + L-glutamate + H(+). The protein operates within amino-acid biosynthesis; L-histidine biosynthesis; L-histidine from 5-phospho-alpha-D-ribose 1-diphosphate: step 5/9. IGPS catalyzes the conversion of PRFAR and glutamine to IGP, AICAR and glutamate. The HisF subunit catalyzes the cyclization activity that produces IGP and AICAR from PRFAR using the ammonia provided by the HisH subunit. In Pseudoalteromonas translucida (strain TAC 125), this protein is Imidazole glycerol phosphate synthase subunit HisF.